We begin with the raw amino-acid sequence, 121 residues long: UPF0102 protein Xfasm12_1748 (121 aa).

It belongs to the UPF0102 family.

The polypeptide is UPF0102 protein Xfasm12_1748 (Xylella fastidiosa (strain M12)).